Reading from the N-terminus, the 335-residue chain is Anthranilate phosphoribosyltransferase (335 aa).

5-phospho-alpha-D-ribose 1-diphosphate-binding positions include G79, 82–83 (GD), S87, 89–92 (NIST), 107–115 (KHGNRSITS), and S119. Anthranilate is bound at residue G79. S91 contributes to the Mg(2+) binding site. N110 is an anthranilate binding site. R165 contributes to the anthranilate binding site. Positions 224 and 225 each coordinate Mg(2+).

This sequence belongs to the anthranilate phosphoribosyltransferase family. In terms of assembly, homodimer. Mg(2+) serves as cofactor.

It catalyses the reaction N-(5-phospho-beta-D-ribosyl)anthranilate + diphosphate = 5-phospho-alpha-D-ribose 1-diphosphate + anthranilate. Its pathway is amino-acid biosynthesis; L-tryptophan biosynthesis; L-tryptophan from chorismate: step 2/5. In terms of biological role, catalyzes the transfer of the phosphoribosyl group of 5-phosphorylribose-1-pyrophosphate (PRPP) to anthranilate to yield N-(5'-phosphoribosyl)-anthranilate (PRA). This Lactococcus lactis subsp. lactis (strain IL1403) (Streptococcus lactis) protein is Anthranilate phosphoribosyltransferase.